The following is a 553-amino-acid chain: Meiotic expression up-regulated protein 18 (553 aa).

Positions 267 to 305 are disordered; the sequence is SNETLCSNDSKHRIARLKNEDNTQKPISKKRKSKKASHK. Positions 275-289 are enriched in basic and acidic residues; the sequence is DSKHRIARLKNEDNT. The span at 293–304 shows a compositional bias: basic residues; the sequence is ISKKRKSKKASH.

The chain is Meiotic expression up-regulated protein 18 (meu18) from Schizosaccharomyces pombe (strain 972 / ATCC 24843) (Fission yeast).